Consider the following 319-residue polypeptide: Urease accessory protein UreD (319 aa).

The tract at residues R284–H319 is disordered.

Belongs to the UreD family. In terms of assembly, ureD, UreF and UreG form a complex that acts as a GTP-hydrolysis-dependent molecular chaperone, activating the urease apoprotein by helping to assemble the nickel containing metallocenter of UreC. The UreE protein probably delivers the nickel.

Its subcellular location is the cytoplasm. Functionally, required for maturation of urease via the functional incorporation of the urease nickel metallocenter. This Prochlorococcus marinus (strain MIT 9313) protein is Urease accessory protein UreD.